The sequence spans 377 residues: MSNVTVSVFTLDKSISEEPVLPSSFIPSSGNVFPKFTSAIPKTAWELWYFDGISKDDRSSIVIGVTRNAEGLKHGGFKVQVFVIWADERTWHRDLFFPESVVSIDESGATEGIWKHATSSSSISFSCAGDLSKASLVFDVPGIVQGDMHLEALPGDTGLDTDATLGPSVYYVRPLGRASVKAQLSLYSSDATAAEQFILGTSANGGMDRVWSPLSWPQVMTESYYLRAQVGPYAMQIMRIFPPKGSENSENQPSTMARLYREGQLICAPQHVVTRDDALITHDSLILSKQNTSDSGDAVTGEYRDKNTGYTVEFVGKGNEEQRWEFQVRHERIIWNTPTSRPGPDATGNTGFVERLYGGTIGESYEGVGTGGQCELS.

The protein belongs to the Diels-Alderase family.

The enzyme catalyses (5S)-3-[(2E,6R,8E,10E,12E)-2,6-dimethyltetradeca-2,8,10,12-tetraenoyl]-5-(hydroxymethyl)pyrrolidine-2,4-dione = trichosetin. It participates in mycotoxin biosynthesis. Its function is as follows. Diels-Alderase; part of the gene cluster that mediates the biosynthesis of equisetin, a trans-fused decalin-containing tetramic acid with antimicrobial activity. The PKS module of eqxS together with the enoylreductase eqxC catalyze the formation of the polyketide unit which is then conjugated to L-serine by the condensation domain of the eqxS NRPS module. Activity of the Dieckmann cyclase domain (RED) results in release of the Dieckmann product intermediate. Diels-Alderase eqx3 is involved in endo-selective Diels-Alder cycloaddition to form the decalin ring, leading to the production of N-desmethylequisetin also called trichosetin. Subsequent N-methylation is carried out by eqxD to give equisetin. The sequence is that of Diels-Alderase fsa2 from Fusarium heterosporum.